The sequence spans 204 residues: Photosystem I reaction center subunit II-2, chloroplastic (204 aa).

A chloroplast-targeting transit peptide spans 1–44 (MATQAAGIFSPAITTTTSAVKKLHLFSSSHRPKSLSFTKTAIRA). T47 carries the phosphothreonine modification. The interval 47-71 (TESSSAAPAVKEAPVGFTPPQLDPN) is disordered. The segment at 137–145 (RLRSKYKIT) is ferredoxin and ferredoxin-oxidoreductase binding.

This sequence belongs to the PsaD family. Interacts with CURT1C.

It localises to the plastid. The protein localises to the chloroplast thylakoid membrane. PSAD can form complexes with ferredoxin and ferredoxin-oxidoreductase in photosystem I (PS I) reaction center. PSAD may encode the ferredoxin-docking protein. This Arabidopsis thaliana (Mouse-ear cress) protein is Photosystem I reaction center subunit II-2, chloroplastic (PSAD2).